Here is a 101-residue protein sequence, read N- to C-terminus: NAD(P)H-quinone oxidoreductase subunit 4L, chloroplastic (101 aa).

The next 3 membrane-spanning stretches (helical) occupy residues 2-22, 32-52, and 61-81; these read MLEH…YGLI, MCLE…SDFF, and IFSI…PAIV.

Belongs to the complex I subunit 4L family. As to quaternary structure, NDH is composed of at least 16 different subunits, 5 of which are encoded in the nucleus.

Its subcellular location is the plastid. The protein localises to the chloroplast thylakoid membrane. The catalysed reaction is a plastoquinone + NADH + (n+1) H(+)(in) = a plastoquinol + NAD(+) + n H(+)(out). It catalyses the reaction a plastoquinone + NADPH + (n+1) H(+)(in) = a plastoquinol + NADP(+) + n H(+)(out). NDH shuttles electrons from NAD(P)H:plastoquinone, via FMN and iron-sulfur (Fe-S) centers, to quinones in the photosynthetic chain and possibly in a chloroplast respiratory chain. The immediate electron acceptor for the enzyme in this species is believed to be plastoquinone. Couples the redox reaction to proton translocation, and thus conserves the redox energy in a proton gradient. The polypeptide is NAD(P)H-quinone oxidoreductase subunit 4L, chloroplastic (Vitis vinifera (Grape)).